The sequence spans 775 residues: Glycerol-3-phosphate acyltransferase (775 aa).

Residues 268–273 carry the HXXXXD motif motif; it reads HRSYID.

It belongs to the GPAT/DAPAT family.

It localises to the cell membrane. The enzyme catalyses sn-glycerol 3-phosphate + an acyl-CoA = a 1-acyl-sn-glycero-3-phosphate + CoA. It participates in phospholipid metabolism; CDP-diacylglycerol biosynthesis; CDP-diacylglycerol from sn-glycerol 3-phosphate: step 1/3. The polypeptide is Glycerol-3-phosphate acyltransferase (plsB) (Mycobacterium leprae (strain TN)).